The following is a 351-amino-acid chain: Calcium uniporter protein, mitochondrial (351 aa).

The N-terminal 50 residues, 1-50, are a transit peptide targeting the mitochondrion; it reads MAAAAGRSLLLLLSSRGGGGGGAGGCGALTAGCFPGLGVSRHRQQQHHRT. Topologically, residues 51–233 are mitochondrial matrix; the sequence is VHQRIASWQN…ISRKAEKRTT (183 aa). A phosphoserine; by CaMK2 mark is found at S57 and S92. Residues 75–165 are N-terminal MCU domain; sequence VTVVYQNGLP…LTYHVRPPKR (91 aa). The residue at position 97 (C97) is an S-glutathionyl cysteine. A coiled-coil region spans residues 192–223; that stretch reads IEQHQLNKERELIERLEDLKEQLAPLEKVRIE. Residues 234–255 form a helical membrane-spanning segment; that stretch reads LVLWGGLAYMATQFGILARLTW. Residues 256–262 lie on the Mitochondrial intermembrane side of the membrane; that stretch reads WEYSWDI. Positions 260–268 match the Selectivity filter motif; that stretch reads WDIMEPVTY. The chain crosses the membrane as a helical span at residues 263–284; sequence MEPVTYFITYGSAMAMYAYFVM. E264 contacts Ca(2+). Residues 285 to 290 form a juxtamembrane helix region; sequence TRQEYV. Residues 285–351 are Mitochondrial matrix-facing; that stretch reads TRQEYVYPEA…LPLRQIGEKD (67 aa). A coiled-coil region spans residues 311–339; the sequence is RFDLEKYNQLKDAIAQAEMDLKRLRDPLQ. K332 is subject to N6-acetyllysine.

The protein belongs to the MCU (TC 1.A.77) family. In terms of assembly, homotetramer. Component of the uniplex complex, composed of MCU, EMRE/SMDT1, MICU1 and MICU2 (or MICU3) in a 4:4:1:1 stoichiometry. Interacts with CCDC109B/MCUB; this inhibits channel activity. Interacts with MCUR1. Interactions with MICU1 and MCUR1 are mutually exclusive. Interacts with SLC25A23. Post-translationally, phosphorylation by CaMK2 in heart leads to increased MCU current. The regulation of MCU by CaMK2 is however subject to discussion: another group was unable to reproduce these results. Phosphorylated on tyrosines by PTK2B/PYK2, promoting oligomerization. Glutathionylation at Cys-97 in response to reactive oxygen species (ROS) promotes MCU higher-order assembly, leading to constitutive activation of the MCU channel and mitochondrial calcium overload. In terms of processing, undergoes proteolytic degradation by SPG7.

The protein resides in the mitochondrion inner membrane. The catalysed reaction is Ca(2+)(in) = Ca(2+)(out). MCU channel activity is regulated by the heterodimer composed of MICU1 and either MICU2 or MICU3, which act as calcium-sensors. At low calcium levels, MICU1 occludes the pore of the MCU channel, preventing mitochondrial calcium uptake. At higher calcium levels, calcium-binding to MICU1 and MICU2 (or MICU3) induces a conformational change that weakens MCU-MICU1 interactions and moves the MICU1-MICU2 heterodimer away from the pore, allowing calcium permeation through the channel. MCU channel activity is gated by EMRE/SMDT1 via the juxtamembrane helix loop. Inhibited by ruthenium red or its derivative Ru360. Its function is as follows. Channel-forming and calcium-conducting subunit of the mitochondrial inner membrane calcium uniporter complex (uniplex), which mediates calcium uptake into the mitochondrial matrix. MCU channel activity is regulated by the calcium-sensor subunits of the uniplex MICU1 and MICU2 (or MICU3). Mitochondrial calcium homeostasis plays key roles in cellular physiology and regulates ATP production, cytoplasmic calcium signals and activation of cell death pathways. Involved in buffering the amplitude of systolic calcium rises in cardiomyocytes. While dispensable for baseline homeostatic cardiac function, acts as a key regulator of short-term mitochondrial calcium loading underlying a 'fight-or-flight' response during acute stress: acts by mediating a rapid increase of mitochondrial calcium in pacemaker cells. Participates in mitochondrial permeability transition during ischemia-reperfusion injury. Mitochondrial calcium uptake in skeletal muscle cells is involved in muscle size in adults. Regulates synaptic vesicle endocytosis kinetics in central nerve terminal. Regulates glucose-dependent insulin secretion in pancreatic beta-cells by regulating mitochondrial calcium uptake. Involved in antigen processing and presentation. This chain is Calcium uniporter protein, mitochondrial, found in Homo sapiens (Human).